The primary structure comprises 475 residues: Sulfate adenylyltransferase subunit 1 (475 aa).

The tr-type G domain maps to 25–239 (KSLLRFLTCG…EVLETVEIQR (215 aa)). A G1 region spans residues 34–41 (GSVDDGKS). 34 to 41 (GSVDDGKS) contributes to the GTP binding site. The tract at residues 92–96 (GITID) is G2. Residues 113-116 (DTPG) form a G3 region. GTP is bound by residues 113–117 (DTPGH) and 168–171 (NKMD). Residues 168-171 (NKMD) are G4. The interval 206-208 (SAL) is G5.

It belongs to the TRAFAC class translation factor GTPase superfamily. Classic translation factor GTPase family. CysN/NodQ subfamily. In terms of assembly, heterodimer composed of CysD, the smaller subunit, and CysN.

It carries out the reaction sulfate + ATP + H(+) = adenosine 5'-phosphosulfate + diphosphate. It functions in the pathway sulfur metabolism; hydrogen sulfide biosynthesis; sulfite from sulfate: step 1/3. In terms of biological role, with CysD forms the ATP sulfurylase (ATPS) that catalyzes the adenylation of sulfate producing adenosine 5'-phosphosulfate (APS) and diphosphate, the first enzymatic step in sulfur assimilation pathway. APS synthesis involves the formation of a high-energy phosphoric-sulfuric acid anhydride bond driven by GTP hydrolysis by CysN coupled to ATP hydrolysis by CysD. The sequence is that of Sulfate adenylyltransferase subunit 1 from Escherichia coli O9:H4 (strain HS).